A 435-amino-acid chain; its full sequence is Adenylosuccinate synthetase (435 aa).

GTP contacts are provided by residues 11-17 (GDEGKGK) and 39-41 (GHT). Asp12 acts as the Proton acceptor in catalysis. Residues Asp12 and Gly39 each coordinate Mg(2+). IMP is bound by residues 12–15 (DEGK), 37–40 (NAGH), Thr128, Arg142, Gln223, Thr238, and Arg302. His40 (proton donor) is an active-site residue. 298 to 304 (SVTGRPR) contacts substrate. GTP-binding positions include Arg304, 330–332 (KLD), and 412–414 (STG).

Belongs to the adenylosuccinate synthetase family. In terms of assembly, homodimer. Requires Mg(2+) as cofactor.

Its subcellular location is the cytoplasm. It catalyses the reaction IMP + L-aspartate + GTP = N(6)-(1,2-dicarboxyethyl)-AMP + GDP + phosphate + 2 H(+). It participates in purine metabolism; AMP biosynthesis via de novo pathway; AMP from IMP: step 1/2. Functionally, plays an important role in the de novo pathway of purine nucleotide biosynthesis. Catalyzes the first committed step in the biosynthesis of AMP from IMP. The polypeptide is Adenylosuccinate synthetase (Coxiella burnetii (strain Dugway 5J108-111)).